The following is a 444-amino-acid chain: Chromosome partition protein MukF (444 aa).

Residues 212–240 (LDETSGNLRELQDTLNAAGDKLQAQLLRI) are leucine-zipper.

This sequence belongs to the MukF family. As to quaternary structure, interacts, and probably forms a ternary complex, with MukE and MukB via its C-terminal region. The complex formation is stimulated by calcium or magnesium. It is required for an interaction between MukE and MukB.

It localises to the cytoplasm. The protein resides in the nucleoid. Functionally, involved in chromosome condensation, segregation and cell cycle progression. May participate in facilitating chromosome segregation by condensation DNA from both sides of a centrally located replisome during cell division. Not required for mini-F plasmid partitioning. Probably acts via its interaction with MukB and MukE. Overexpression results in anucleate cells. It has a calcium binding activity. The polypeptide is Chromosome partition protein MukF (Haemophilus influenzae (strain ATCC 51907 / DSM 11121 / KW20 / Rd)).